A 327-amino-acid polypeptide reads, in one-letter code: Porphobilinogen deaminase (327 aa).

The residue at position 250 (Cys-250) is an S-(dipyrrolylmethanemethyl)cysteine.

Belongs to the HMBS family. In terms of assembly, monomer. Dipyrromethane is required as a cofactor.

The catalysed reaction is 4 porphobilinogen + H2O = hydroxymethylbilane + 4 NH4(+). It functions in the pathway porphyrin-containing compound metabolism; protoporphyrin-IX biosynthesis; coproporphyrinogen-III from 5-aminolevulinate: step 2/4. In terms of biological role, tetrapolymerization of the monopyrrole PBG into the hydroxymethylbilane pre-uroporphyrinogen in several discrete steps. This is Porphobilinogen deaminase from Paraburkholderia phymatum (strain DSM 17167 / CIP 108236 / LMG 21445 / STM815) (Burkholderia phymatum).